We begin with the raw amino-acid sequence, 181 residues long: Large ribosomal subunit protein uL6 (181 aa).

The protein belongs to the universal ribosomal protein uL6 family. Part of the 50S ribosomal subunit.

Its function is as follows. This protein binds to the 23S rRNA, and is important in its secondary structure. It is located near the subunit interface in the base of the L7/L12 stalk, and near the tRNA binding site of the peptidyltransferase center. This Ruthia magnifica subsp. Calyptogena magnifica protein is Large ribosomal subunit protein uL6.